The following is a 315-amino-acid chain: Methionyl-tRNA formyltransferase (315 aa).

(6S)-5,6,7,8-tetrahydrofolate is bound at residue 112–115 (SLLP).

Belongs to the Fmt family.

It carries out the reaction L-methionyl-tRNA(fMet) + (6R)-10-formyltetrahydrofolate = N-formyl-L-methionyl-tRNA(fMet) + (6S)-5,6,7,8-tetrahydrofolate + H(+). Its function is as follows. Attaches a formyl group to the free amino group of methionyl-tRNA(fMet). The formyl group appears to play a dual role in the initiator identity of N-formylmethionyl-tRNA by promoting its recognition by IF2 and preventing the misappropriation of this tRNA by the elongation apparatus. The protein is Methionyl-tRNA formyltransferase of Leptospira interrogans serogroup Icterohaemorrhagiae serovar copenhageni (strain Fiocruz L1-130).